The chain runs to 478 residues: MAVIDQHQDDFSNVSWNTDEHTAAESSSSVTATEFDDTERNGHNAYESDAPGSDGQEVLDCVVSEPLKENDGSKDTFVSYLITTNTTFPSFQRSQTTVRRRFTDFVFLYKALSRDYPTAAVPPLPDKQRMEYVSGNRFGPDFTNRRAHSLQRFLNRLSLHPVLRRADILHIFLESPDWNATMRSRSVRGSTSSDTGSSGVFDNLTDSFLNAFTKAHKHDKRFLEVRERSDKLDEDLAHIEKVVARVARRENDIELDFKDLAEQFQKLITLEPGVENEVRHFANSIEDTAMGLRKLKDVTDGDYLGSLRDMQAYSTALKSLLKAREQKQVDYEQLTEYLNKNTVDRDQLQSGQGSSGLSGASGRLMRKLEDVRGVDHEQARRDRQRKLEMNIDKLTTEAERAKKTSEMFDDEVVKEVADFERIKRVEFKKQLGGLADSQIEFYDEVTEIWEGYVKAMEKEGVSGTRSTGVEPPGRRLAD.

The span at 1 to 10 shows a compositional bias: basic and acidic residues; the sequence is MAVIDQHQDD. Residues 1–56 form a disordered region; sequence MAVIDQHQDDFSNVSWNTDEHTAAESSSSVTATEFDDTERNGHNAYESDAPGSDGQ. A compositionally biased stretch (low complexity) spans 24-33; sequence AESSSSVTAT. The PX domain maps to 58–180; the sequence is VLDCVVSEPL…IFLESPDWNA (123 aa). A 1,2-diacyl-sn-glycero-3-phospho-(1D-myo-inositol-3-phosphate) is bound by residues Arg101, Thr103, Lys127, and Arg146. The disordered stretch occupies residues 459-478; that stretch reads EGVSGTRSTGVEPPGRRLAD.

Belongs to the sorting nexin family. As to quaternary structure, interacts with the mitochondrial prohibitin complex subunits PHB1 and PHB2; the interaction is direct and plays a role in mitophagy.

Its subcellular location is the cytoplasm. The protein localises to the cytosol. The protein resides in the preautophagosomal structure membrane. It is found in the endosome membrane. It localises to the mitochondrion membrane. Its subcellular location is the lipid droplet. Its function is as follows. Sorting nexin, involved in the separation or division of vacuoles throughout the entire life cycle of the cells. Involved in retrieval of late-Golgi SNAREs from post-Golgi endosomes to the trans-Golgi network, for cytoplasm to vacuole transport (Cvt), and autophagy of large cargos including mitophagy, pexophagy and glycophagy. Required for the switch to necrotrophic growth. This Colletotrichum higginsianum (strain IMI 349063) (Crucifer anthracnose fungus) protein is Sorting nexin-4.